The sequence spans 534 residues: Cytochrome c oxidase subunit 1 (534 aa).

A helical transmembrane segment spans residues 16–36; sequence VLYFIFSVFCGMAGTGMSMII. Positions 39 and 44 each coordinate Ca(2+). Residue His-62 coordinates Fe(II)-heme a. The next 6 helical transmembrane spans lie at 64–84, 101–121, 147–167, 183–203, 235–255, and 267–287; these read ILMV…NYLL, ISFW…LVES, AIFA…NFIV, PLFV…LPVL, LFWF…FGVI, and VFGE…GFLV. Residue His-241 participates in Cu cation binding. The 1'-histidyl-3'-tyrosine (His-Tyr) cross-link spans 241–245; it reads HPEVY. O2 is bound at residue Tyr-245. 2 residues coordinate Cu cation: His-290 and His-291. Transmembrane regions (helical) follow at residues 310–330 and 338–358; these read MIIA…IYGG and MMYA…GVAL. His-368 and Asp-369 together coordinate Mg(2+). The next 2 membrane-spanning stretches (helical) occupy residues 372–392 and 414–434; these read YVVA…MFAG and FWLI…LGIN. His-376 lines the heme a3 pocket. His-378 serves as a coordination point for Fe(II)-heme a. A Ca(2+)-binding site is contributed by Pro-441. Residues 453 to 473 traverse the membrane as a helical segment; sequence VSSIGSFIAMISLILFIYILF.

The protein belongs to the heme-copper respiratory oxidase family. Component of the cytochrome c oxidase (complex IV, CIV), a multisubunit enzyme composed of a catalytic core of 3 subunits and several supernumerary subunits. The complex exists as a monomer or a dimer and forms supercomplexes (SCs) in the inner mitochondrial membrane with ubiquinol-cytochrome c oxidoreductase (cytochrome b-c1 complex, complex III, CIII). Heme is required as a cofactor. The cofactor is Cu cation.

It is found in the mitochondrion inner membrane. It carries out the reaction 4 Fe(II)-[cytochrome c] + O2 + 8 H(+)(in) = 4 Fe(III)-[cytochrome c] + 2 H2O + 4 H(+)(out). It participates in energy metabolism; oxidative phosphorylation. Its function is as follows. Component of the cytochrome c oxidase, the last enzyme in the mitochondrial electron transport chain which drives oxidative phosphorylation. The respiratory chain contains 3 multisubunit complexes succinate dehydrogenase (complex II, CII), ubiquinol-cytochrome c oxidoreductase (cytochrome b-c1 complex, complex III, CIII) and cytochrome c oxidase (complex IV, CIV), that cooperate to transfer electrons derived from NADH and succinate to molecular oxygen, creating an electrochemical gradient over the inner membrane that drives transmembrane transport and the ATP synthase. Cytochrome c oxidase is the component of the respiratory chain that catalyzes the reduction of oxygen to water. Electrons originating from reduced cytochrome c in the intermembrane space (IMS) are transferred via the dinuclear copper A center (CU(A)) of subunit 2 and heme A of subunit 1 to the active site in subunit 1, a binuclear center (BNC) formed by heme A3 and copper B (CU(B)). The BNC reduces molecular oxygen to 2 water molecules using 4 electrons from cytochrome c in the IMS and 4 protons from the mitochondrial matrix. This chain is Cytochrome c oxidase subunit 1 (COX1), found in Vanderwaltozyma polyspora (strain ATCC 22028 / DSM 70294 / BCRC 21397 / CBS 2163 / NBRC 10782 / NRRL Y-8283 / UCD 57-17) (Kluyveromyces polysporus).